The following is a 678-amino-acid chain: MAAQRARAPAMRTRGGDAALCAPEDGWVKVHPTPGTMLFREILLGQMGYTEGQGVYNVVRSSEAATRQLQAAIFHALLNATTYRDLEEDWRRHVVARGLQPQRLVRRYRNAREGDIAGVAERVFDTWRCTLRTTLLDFAHGVVDCFAPGGPSGPTSFPKYIDWLTCLGLVPILRKTREGEATQRLGAFLRQHTLPRQLATVAGAAERAGPGLLDLAVAFDSTRMAEYDRVHIYYNHRRGEWLVRDPVSGQRGECLVLCPPLWTGDRLVFDSPVQRLCPEIVACHALREHAHICRLRNTASVKVLLGRKSDSERGVAGAARVVNKALGEDDETKAGSAASRLVRLIINMKGMRHVGDINDTVRAYLDEAGGHLIDTPAVDHTLPGFGKGGTGRGSRPQDPGARPQQLRQAFQTAVVNNINGMLEGYINNLFGTIERLRETNAGLATQLQARDRELRRAQAGALEREQRAADRAAGGGAGRPAEADLLRADYDIIDVSKSMDDDTYVANSFQHQYIPAYGQDLERLSRLWEHELVRCFKILRHRNKQGQETSISYSSGAIASFVAPYFEYVLRAPRAGALITGSDVILGEEELWEAVFKKTRLQTYLTDVAALFVADVQHAALPRPPSPTPADFRASASPRGGSRSRTRTRSRSPGRTPRGAPDQGWGVERRDGRPHARR.

A disordered region spans residues 376-405 (PAVDHTLPGFGKGGTGRGSRPQDPGARPQQ). The putative leucine zipper motif stretch occupies residues 422 to 443 (LEGYINNLFGTIERLRETNAGL). Basic and acidic residues predominate over residues 459-470 (AGALEREQRAAD). 2 disordered regions span residues 459–480 (AGAL…AGRP) and 622–678 (PRPP…HARR). Residues 642–652 (SRSRTRTRSRS) show a composition bias toward basic residues. The segment covering 667–678 (VERRDGRPHARR) has biased composition (basic and acidic residues).

The protein belongs to the herpesviridae portal protein family. Homododecamerizes. Interacts with terminase subunits TRM1 and TRM3.

The protein resides in the virion. The protein localises to the host nucleus. In terms of biological role, forms a portal in the viral capsid through which viral DNA is translocated during DNA packaging. Assembles as a dodecamer at a single fivefold axe of the T=16 icosahedric capsid. Binds to the molecular motor that translocates the viral DNA, termed terminase. The polypeptide is Portal protein (UL6) (Homo sapiens (Human)).